Here is a 624-residue protein sequence, read N- to C-terminus: Steryl-sulfatase (624 aa).

Residues Met-1–Ala-22 form the signal peptide. Residues Asp-24 to Val-192 lie on the Lumenal side of the membrane. Positions 43 and 44 each coordinate Ca(2+). Residue Asn-55 is glycosylated (N-linked (GlcNAc...) asparagine). A Ca(2+)-binding site is contributed by Cys-83. Cys-83 serves as the catalytic Nucleophile. At Cys-83 the chain carries 3-oxoalanine (Cys). The active site involves His-144. Intrachain disulfides connect Cys-149–Cys-156 and Cys-178–Cys-250. The helical transmembrane segment at Phe-193 to Leu-216 threads the bilayer. Residues Ala-217–Pro-220 are Cytoplasmic-facing. A helical transmembrane segment spans residues Gly-221–Cys-242. Over Leu-243 to Arg-624 the chain is Lumenal. The Ca(2+) site is built by Asp-350 and His-351. Intrachain disulfides connect Cys-454-Cys-495 and Cys-487-Cys-493. Asn-465 carries N-linked (GlcNAc...) asparagine glycosylation. The interval Gly-572 to Arg-624 is disordered. Residues Asp-583–Tyr-611 are compositionally biased toward basic and acidic residues.

It belongs to the sulfatase family. Homodimer. It depends on Ca(2+) as a cofactor. The conversion to 3-oxoalanine (also known as C-formylglycine, FGly), of a serine or cysteine residue in prokaryotes and of a cysteine residue in eukaryotes, is critical for catalytic activity.

Its subcellular location is the microsome membrane. The protein resides in the endoplasmic reticulum membrane. The catalysed reaction is dehydroepiandrosterone 3-sulfate + H2O = 3beta-hydroxyandrost-5-en-17-one + sulfate + H(+). It carries out the reaction estrone 3-sulfate + H2O = estrone + sulfate + H(+). Functionally, catalyzes the conversion of sulfated steroid precursors, such as dehydroepiandrosterone sulfate (DHEA-S) and estrone sulfate to the free steroid. This is Steryl-sulfatase (Sts) from Mus musculus (Mouse).